Consider the following 562-residue polypeptide: Arginine--tRNA ligase (562 aa).

A 'HIGH' region motif is present at residues 129–139; the sequence is ANPTGPLHVGH.

The protein belongs to the class-I aminoacyl-tRNA synthetase family. In terms of assembly, monomer.

The protein localises to the cytoplasm. It catalyses the reaction tRNA(Arg) + L-arginine + ATP = L-arginyl-tRNA(Arg) + AMP + diphosphate. This Stenotrophomonas maltophilia (strain K279a) protein is Arginine--tRNA ligase.